The chain runs to 941 residues: Isoleucine--tRNA ligase (941 aa).

The 'HIGH' region signature appears at 59-69 (PYANGNIHIGH). Glu-562 is an L-isoleucyl-5'-AMP binding site. The 'KMSKS' region signature appears at 603 to 607 (KMSKS). ATP is bound at residue Lys-606. Positions 904, 907, 924, and 927 each coordinate Zn(2+).

This sequence belongs to the class-I aminoacyl-tRNA synthetase family. IleS type 1 subfamily. Monomer. It depends on Zn(2+) as a cofactor.

The protein localises to the cytoplasm. It carries out the reaction tRNA(Ile) + L-isoleucine + ATP = L-isoleucyl-tRNA(Ile) + AMP + diphosphate. Its function is as follows. Catalyzes the attachment of isoleucine to tRNA(Ile). As IleRS can inadvertently accommodate and process structurally similar amino acids such as valine, to avoid such errors it has two additional distinct tRNA(Ile)-dependent editing activities. One activity is designated as 'pretransfer' editing and involves the hydrolysis of activated Val-AMP. The other activity is designated 'posttransfer' editing and involves deacylation of mischarged Val-tRNA(Ile). The chain is Isoleucine--tRNA ligase from Haemophilus influenzae (strain ATCC 51907 / DSM 11121 / KW20 / Rd).